A 316-amino-acid polypeptide reads, in one-letter code: Methionyl-tRNA formyltransferase (316 aa).

111-114 (SLLP) provides a ligand contact to (6S)-5,6,7,8-tetrahydrofolate.

Belongs to the Fmt family.

The catalysed reaction is L-methionyl-tRNA(fMet) + (6R)-10-formyltetrahydrofolate = N-formyl-L-methionyl-tRNA(fMet) + (6S)-5,6,7,8-tetrahydrofolate + H(+). Functionally, attaches a formyl group to the free amino group of methionyl-tRNA(fMet). The formyl group appears to play a dual role in the initiator identity of N-formylmethionyl-tRNA by promoting its recognition by IF2 and preventing the misappropriation of this tRNA by the elongation apparatus. The chain is Methionyl-tRNA formyltransferase from Limosilactobacillus fermentum (strain NBRC 3956 / LMG 18251) (Lactobacillus fermentum).